The following is a 329-amino-acid chain: Acetyl-coenzyme A carboxylase carboxyl transferase subunit alpha (329 aa).

Positions 40-294 (QLESLAARRR…RAAIERHLEQ (255 aa)) constitute a CoA carboxyltransferase C-terminal domain.

Belongs to the AccA family. As to quaternary structure, acetyl-CoA carboxylase is a heterohexamer composed of biotin carboxyl carrier protein (AccB), biotin carboxylase (AccC) and two subunits each of ACCase subunit alpha (AccA) and ACCase subunit beta (AccD).

It localises to the cytoplasm. The catalysed reaction is N(6)-carboxybiotinyl-L-lysyl-[protein] + acetyl-CoA = N(6)-biotinyl-L-lysyl-[protein] + malonyl-CoA. It functions in the pathway lipid metabolism; malonyl-CoA biosynthesis; malonyl-CoA from acetyl-CoA: step 1/1. Component of the acetyl coenzyme A carboxylase (ACC) complex. First, biotin carboxylase catalyzes the carboxylation of biotin on its carrier protein (BCCP) and then the CO(2) group is transferred by the carboxyltransferase to acetyl-CoA to form malonyl-CoA. In Synechococcus sp. (strain CC9605), this protein is Acetyl-coenzyme A carboxylase carboxyl transferase subunit alpha.